The primary structure comprises 469 residues: Ubiquitin carboxyl-terminal hydrolase MINDY-1 (469 aa).

Residues 1-85 (MEYHQPEDPA…APPGPTLGTL (85 aa)) form a disordered region. Residues 23–53 (ENHEVLAGPDEHPQDTDARDADGEAREREPA) show a composition bias toward basic and acidic residues. Over residues 66-76 (LESPLPEASSA) the composition is skewed to low complexity. S103 carries the phosphoserine modification. C137 serves as the catalytic Nucleophile. H319 acts as the Proton acceptor in catalysis. Positions 388–426 (QVDQDYLIALSLQQQQPRGPLGLTDLELAQQLQQEEYQQ) are ubiquitin-binding domain (UBD). Residue S441 is modified to Phosphoserine. The disordered stretch occupies residues 441 to 469 (SLQGRGATSGRPAGERRQRPKHESDCILL). Over residues 453 to 469 (AGERRQRPKHESDCILL) the composition is skewed to basic and acidic residues.

Belongs to the MINDY deubiquitinase family. FAM63 subfamily.

It carries out the reaction Thiol-dependent hydrolysis of ester, thioester, amide, peptide and isopeptide bonds formed by the C-terminal Gly of ubiquitin (a 76-residue protein attached to proteins as an intracellular targeting signal).. Functionally, hydrolase that can specifically remove 'Lys-48'-linked conjugated ubiquitin from proteins. Has exodeubiquitinase activity and has a preference for long polyubiquitin chains. May play a regulatory role at the level of protein turnover. This Homo sapiens (Human) protein is Ubiquitin carboxyl-terminal hydrolase MINDY-1.